The following is a 208-amino-acid chain: Putative proteasome subunit alpha type-4-B (208 aa).

Belongs to the peptidase T1A family. Component of the 20S core complex of the 26S proteasome. The 26S proteasome is composed of a core protease (CP), known as the 20S proteasome, capped at one or both ends by the 19S regulatory particle (RP/PA700). The 20S proteasome core is composed of 28 subunits that are arranged in four stacked rings, resulting in a barrel-shaped structure. The two end rings are each formed by seven alpha subunits, and the two central rings are each formed by seven beta subunits. The catalytic chamber with the active sites is on the inside of the barrel.

The protein resides in the cytoplasm. Its subcellular location is the nucleus. The proteasome is a multicatalytic proteinase complex which is characterized by its ability to cleave peptides with Arg, Phe, Tyr, Leu, and Glu adjacent to the leaving group at neutral or slightly basic pH. The proteasome has an ATP-dependent proteolytic activity. The polypeptide is Putative proteasome subunit alpha type-4-B (PAC2) (Arabidopsis thaliana (Mouse-ear cress)).